The sequence spans 138 residues: Large ribosomal subunit protein uL16 (138 aa).

Over residues 1-17 (MLIPRKVKHRKQHHPRQ) the composition is skewed to basic residues. Residues 1–23 (MLIPRKVKHRKQHHPRQRGIASG) form a disordered region.

This sequence belongs to the universal ribosomal protein uL16 family. As to quaternary structure, part of the 50S ribosomal subunit.

Its function is as follows. Binds 23S rRNA and is also seen to make contacts with the A and possibly P site tRNAs. The chain is Large ribosomal subunit protein uL16 from Mycobacterium sp. (strain JLS).